Consider the following 72-residue polypeptide: Heat shock factor-binding protein 1-like protein 1 (72 aa).

Residues 12–62 (DLLQNAAENLLLEVEEHFQALTTTLNLRMEEMGSRIEDLQRNVDDLMTQAG) adopt a coiled-coil conformation.

Belongs to the HSBP1 family.

In Mus musculus (Mouse), this protein is Heat shock factor-binding protein 1-like protein 1 (Hsbp1l1).